The sequence spans 235 residues: MSRSARRKTSALNTVLRVVEVFASIQGEGPFTGTYSVFVRLAGCNLRCPFCDTRYAWSLEAGKPLGVEELVEEIARYEPSLVVITGGEPLLQRHPLNSLVEGLESLGLRVQLETNGILPAPARDEQLWRVYHVVSPKDVPVRVPGAKLHPSWVDYARATGRAWFKFLVANEQHVREVAEYVAKLGIPRSRVYIMPLTPEKLDMKELLELHSRIASLAVKWRLNFSPRLHLLVQLP.

Substrate-binding positions include 25 to 27 (IQG) and Arg40. The 205-residue stretch at 31–235 (FTGTYSVFVR…PRLHLLVQLP (205 aa)) folds into the Radical SAM core domain. [4Fe-4S] cluster contacts are provided by Cys44, Cys48, and Cys51. Residue Thr53 participates in Mg(2+) binding. Thr85 contacts substrate. Residues Gly87 and 135 to 137 (SPK) contribute to the S-adenosyl-L-methionine site. Pro235 contributes to the substrate binding site.

The protein belongs to the radical SAM superfamily. 7-carboxy-7-deazaguanine synthase family. As to quaternary structure, homodimer. Requires [4Fe-4S] cluster as cofactor. S-adenosyl-L-methionine serves as cofactor. The cofactor is Mg(2+).

The catalysed reaction is 6-carboxy-5,6,7,8-tetrahydropterin + H(+) = 7-carboxy-7-deazaguanine + NH4(+). It functions in the pathway purine metabolism; 7-cyano-7-deazaguanine biosynthesis. In terms of biological role, catalyzes the complex heterocyclic radical-mediated conversion of 6-carboxy-5,6,7,8-tetrahydropterin (CPH4) to 7-carboxy-7-deazaguanine (CDG), a step common to the biosynthetic pathways of all 7-deazapurine-containing compounds. The chain is 7-carboxy-7-deazaguanine synthase from Hyperthermus butylicus (strain DSM 5456 / JCM 9403 / PLM1-5).